Here is a 334-residue protein sequence, read N- to C-terminus: Holliday junction branch migration complex subunit RuvB (334 aa).

A large ATPase domain (RuvB-L) region spans residues 1–181 (MTRILDNDLM…FGITGHMEYY (181 aa)). Residues L20, R21, G62, K65, T66, T67, 128 to 130 (EDF), R171, Y181, and R218 each bind ATP. Residue T66 participates in Mg(2+) binding. Residues 182 to 252 (QVDDLTEIVE…MTDKALEMLD (71 aa)) form a small ATPAse domain (RuvB-S) region. A head domain (RuvB-H) region spans residues 255–334 (HEGLDYVDQK…LKYPLDTKTE (80 aa)). The DNA site is built by R291, R310, R312, and R315.

The protein belongs to the RuvB family. Homohexamer. Forms an RuvA(8)-RuvB(12)-Holliday junction (HJ) complex. HJ DNA is sandwiched between 2 RuvA tetramers; dsDNA enters through RuvA and exits via RuvB. An RuvB hexamer assembles on each DNA strand where it exits the tetramer. Each RuvB hexamer is contacted by two RuvA subunits (via domain III) on 2 adjacent RuvB subunits; this complex drives branch migration. In the full resolvosome a probable DNA-RuvA(4)-RuvB(12)-RuvC(2) complex forms which resolves the HJ.

Its subcellular location is the cytoplasm. The enzyme catalyses ATP + H2O = ADP + phosphate + H(+). Its function is as follows. The RuvA-RuvB-RuvC complex processes Holliday junction (HJ) DNA during genetic recombination and DNA repair, while the RuvA-RuvB complex plays an important role in the rescue of blocked DNA replication forks via replication fork reversal (RFR). RuvA specifically binds to HJ cruciform DNA, conferring on it an open structure. The RuvB hexamer acts as an ATP-dependent pump, pulling dsDNA into and through the RuvAB complex. RuvB forms 2 homohexamers on either side of HJ DNA bound by 1 or 2 RuvA tetramers; 4 subunits per hexamer contact DNA at a time. Coordinated motions by a converter formed by DNA-disengaged RuvB subunits stimulates ATP hydrolysis and nucleotide exchange. Immobilization of the converter enables RuvB to convert the ATP-contained energy into a lever motion, pulling 2 nucleotides of DNA out of the RuvA tetramer per ATP hydrolyzed, thus driving DNA branch migration. The RuvB motors rotate together with the DNA substrate, which together with the progressing nucleotide cycle form the mechanistic basis for DNA recombination by continuous HJ branch migration. Branch migration allows RuvC to scan DNA until it finds its consensus sequence, where it cleaves and resolves cruciform DNA. This Streptococcus uberis (strain ATCC BAA-854 / 0140J) protein is Holliday junction branch migration complex subunit RuvB.